The primary structure comprises 396 residues: S-arrestin (396 aa).

The segment covering 375 to 386 (ARDPLKGELQAE) has biased composition (basic and acidic residues). The interval 375-396 (ARDPLKGELQAEEKEEEEDDEK) is disordered. Acidic residues predominate over residues 387–396 (EKEEEEDDEK).

This sequence belongs to the arrestin family. Interacts with RHO (via the phosphorylated C-terminus).

It localises to the cell projection. Its subcellular location is the cilium. The protein localises to the photoreceptor outer segment. It is found in the membrane. Binds to photoactivated, phosphorylated RHO and terminates RHO signaling via G-proteins by competing with G-proteins for the same binding site on RHO. May play a role in preventing light-dependent degeneration of retinal photoreceptor cells. The chain is S-arrestin (sag) from Xenopus laevis (African clawed frog).